A 467-amino-acid polypeptide reads, in one-letter code: Serum response factor homolog B (467 aa).

Polar residues predominate over residues 1–15 (MELNMNQYDNIESND). Disordered stretches follow at residues 1-38 (MELN…KSGR), 115-245 (NTPD…NNLT), and 301-467 (IQNI…PSDL). Residues 36-96 (SGRRKINIEF…GHVYTFATPK (61 aa)) enclose the MADS-box domain. Residues 128-205 (NNNNGNNSNN…NNNNNNNNNN (78 aa)) are compositionally biased toward low complexity. A compositionally biased stretch (basic and acidic residues) spans 206-220 (CKEEQNMNIPNERKS). Low complexity-rich tracts occupy residues 222–245 (NNIN…NNLT), 301–334 (IQNI…SNNI), 347–392 (GSNS…NSNN), and 401–440 (PSPI…YGGY). Residues 442 to 467 (QPFSRNYPLQSNIATNSTVSKAPSDL) are compositionally biased toward polar residues.

The protein resides in the nucleus. The polypeptide is Serum response factor homolog B (srfB) (Dictyostelium discoideum (Social amoeba)).